The sequence spans 117 residues: Large ribosomal subunit protein uL22 (117 aa).

This sequence belongs to the universal ribosomal protein uL22 family. In terms of assembly, part of the 50S ribosomal subunit.

Functionally, this protein binds specifically to 23S rRNA; its binding is stimulated by other ribosomal proteins, e.g. L4, L17, and L20. It is important during the early stages of 50S assembly. It makes multiple contacts with different domains of the 23S rRNA in the assembled 50S subunit and ribosome. Its function is as follows. The globular domain of the protein is located near the polypeptide exit tunnel on the outside of the subunit, while an extended beta-hairpin is found that lines the wall of the exit tunnel in the center of the 70S ribosome. The sequence is that of Large ribosomal subunit protein uL22 from Synechococcus elongatus (strain ATCC 33912 / PCC 7942 / FACHB-805) (Anacystis nidulans R2).